The sequence spans 380 residues: MGIQGLAKLIADVAPSAIRENDIKSYFGRKVAIDASMSIYQFLIAVRQGGDVLQNEEGETTSHLMGMFYRTIRMMENGIKPVYVFDGKPPQLKSGELAKRSERRAEAEKQLQQAQAAGAEQEVEKFTKRLVKVTKQHNDECKHLLSLMGIPYLDAPSEAEASCAALVKAGKVYAAATEDMDCLTFGSPVLMRHLTASEAKKLPIQEFHLSRILQELGLNQEQFVDLCILLGSDYCESIRGIGPKRAVDLIQKHKSIEEIVRRLDPSKYPVPENWLHKEAHQLFLKPEVLDPESVELKWSEPNEEELVKFMCGEKQFSEERIRSGVKRLSKSRQGSTQGRLDDFFKVTGSLSSAKRKEPEPKGSTKKKAKTGAAGKFKRGK.

An N-domain region spans residues M1–R104. Position 19 is a symmetric dimethylarginine; by PRMT5 (R19). D34 is a binding site for Mg(2+). 2 residues coordinate DNA: R47 and R70. The residue at position 80 (K80) is an N6-acetyllysine. D86 contributes to the Mg(2+) binding site. R100 and R104 each carry symmetric dimethylarginine; by PRMT5. Positions E122–H253 are I-domain. E158, E160, D179, and D181 together coordinate Mg(2+). A DNA-binding site is contributed by E158. Residue S187 is modified to Phosphoserine; by CDK2. Residue R192 is modified to Symmetric dimethylarginine; by PRMT5. S197 carries the phosphoserine modification. DNA contacts are provided by G231 and D233. D233 lines the Mg(2+) pocket. Phosphoserine is present on residues S255, S293, and S335. Positions R327–K380 are disordered. The residue at position 336 (T336) is a Phosphothreonine. Positions T336 to F344 are interaction with PCNA. At K354 the chain carries N6-acetyllysine. The span at S363–K380 shows a compositional bias: basic residues. T364 bears the Phosphothreonine mark. N6-acetyllysine is present on residues K375, K377, and K380.

The protein belongs to the XPG/RAD2 endonuclease family. FEN1 subfamily. Interacts with PCNA. Three molecules of FEN1 bind to one PCNA trimer with each molecule binding to one PCNA monomer. PCNA stimulates the nuclease activity without altering cleavage specificity. The C-terminal domain binds EP300; can bind simultaneously to both PCNA and EP300. Interacts with DDX11; this interaction is direct and increases flap endonuclease activity of FEN1. Interacts with WDR4; regulating its endonuclease activity. Interacts with POLB. Mg(2+) serves as cofactor. In terms of processing, acetylated by EP300. Acetylation inhibits both endonuclease and exonuclease activity. Acetylation also reduces DNA-binding activity but does not affect interaction with PCNA or EP300. Post-translationally, phosphorylation upon DNA damage induces relocalization to the nuclear plasma. Phosphorylation at Ser-187 by CDK2 occurs during late S-phase and results in dissociation from PCNA. Methylation at Arg-192 by PRMT5 impedes Ser-187 phosphorylation and increases interaction with PCNA.

The protein localises to the nucleus. Its subcellular location is the nucleolus. The protein resides in the nucleoplasm. It localises to the mitochondrion. Structure-specific nuclease with 5'-flap endonuclease and 5'-3' exonuclease activities involved in DNA replication and repair. During DNA replication, cleaves the 5'-overhanging flap structure that is generated by displacement synthesis when DNA polymerase encounters the 5'-end of a downstream Okazaki fragment. It enters the flap from the 5'-end and then tracks to cleave the flap base, leaving a nick for ligation. Also involved in the long patch base excision repair (LP-BER) pathway, by cleaving within the apurinic/apyrimidinic (AP) site-terminated flap. Acts as a genome stabilization factor that prevents flaps from equilibrating into structures that lead to duplications and deletions. Also possesses 5'-3' exonuclease activity on nicked or gapped double-stranded DNA, and exhibits RNase H activity. Also involved in replication and repair of rDNA and in repairing mitochondrial DNA. The polypeptide is Flap endonuclease 1 (Macaca fascicularis (Crab-eating macaque)).